The following is a 90-amino-acid chain: uncharacterized protein (90 aa).

The N-terminal stretch at 1–20 (MEKLFVLVFALTLLAFSSEA) is a signal peptide. The tract at residues 31-50 (QLLRSRRQDRPSKPGFPDEP) is disordered.

It is found in the secreted. This is an uncharacterized protein from Rattus norvegicus (Rat).